A 364-amino-acid chain; its full sequence is D-alanine--D-alanine ligase (364 aa).

Residues 140–346 form the ATP-grasp domain; the sequence is KKLALLEGIP…YSQLIDKLIS (207 aa). ATP is bound at residue 173–228; that stretch reads ESEFSYPVFVKPANSGSSVGISKAKDREDLVLAIHEAFLYDTKILIEQAINAREIE. D299, E313, and N315 together coordinate Mg(2+).

Belongs to the D-alanine--D-alanine ligase family. Requires Mg(2+) as cofactor. The cofactor is Mn(2+).

It is found in the cytoplasm. The catalysed reaction is 2 D-alanine + ATP = D-alanyl-D-alanine + ADP + phosphate + H(+). It participates in cell wall biogenesis; peptidoglycan biosynthesis. Cell wall formation. In Caldicellulosiruptor bescii (strain ATCC BAA-1888 / DSM 6725 / KCTC 15123 / Z-1320) (Anaerocellum thermophilum), this protein is D-alanine--D-alanine ligase.